The primary structure comprises 278 residues: Octanoyl-[GcvH]:protein N-octanoyltransferase (278 aa).

The BPL/LPL catalytic domain occupies 41–247; that stretch reads DISDNVVRTW…AIKDLGGVLN (207 aa). Cys-146 functions as the Acyl-thioester intermediate in the catalytic mechanism.

This sequence belongs to the octanoyltransferase LipL family.

The enzyme catalyses N(6)-octanoyl-L-lysyl-[glycine-cleavage complex H protein] + L-lysyl-[lipoyl-carrier protein] = N(6)-octanoyl-L-lysyl-[lipoyl-carrier protein] + L-lysyl-[glycine-cleavage complex H protein]. It functions in the pathway protein modification; protein lipoylation via endogenous pathway; protein N(6)-(lipoyl)lysine from octanoyl-[acyl-carrier-protein]. In terms of biological role, catalyzes the amidotransfer (transamidation) of the octanoyl moiety from octanoyl-GcvH to the lipoyl domain of the E2 subunit of lipoate-dependent enzymes. The sequence is that of Octanoyl-[GcvH]:protein N-octanoyltransferase from Staphylococcus aureus (strain NCTC 8325 / PS 47).